A 359-amino-acid polypeptide reads, in one-letter code: Peptide chain release factor 1 (359 aa).

Gln-236 is modified (N5-methylglutamine).

Belongs to the prokaryotic/mitochondrial release factor family. In terms of processing, methylated by PrmC. Methylation increases the termination efficiency of RF1.

The protein localises to the cytoplasm. Peptide chain release factor 1 directs the termination of translation in response to the peptide chain termination codons UAG and UAA. The sequence is that of Peptide chain release factor 1 (prfA) from Mycoplasma pneumoniae (strain ATCC 29342 / M129 / Subtype 1) (Mycoplasmoides pneumoniae).